The chain runs to 117 residues: Appetite-regulating hormone (117 aa).

Residues 1–23 (MPSPGTVCSLLLFSMLWADLAMA) form the signal peptide. Ser26 is lipidated: O-decanoyl serine; alternate. The O-hexanoyl serine; alternate moiety is linked to residue Ser26. Ser26 is lipidated: O-octanoyl serine; alternate. The disordered stretch occupies residues 29-52 (SPEHQKVQQRKESKKPPAKLQPRA). A compositionally biased stretch (basic and acidic residues) spans 31–43 (EHQKVQQRKESKK). A propeptide spans 52 to 75 (ALEGLIHPEDTSQVEGAEDELEIR) (removed in mature form). Leu98 carries the post-translational modification Leucine amide. The propeptide at 99–117 (GKFLQDVLWEEADEVLADE) is removed in mature form.

This sequence belongs to the motilin family. O-octanoylated by GOAT/MBOAT4. O-octanoylation or O-decanoylation is essential for ghrelin activity. The O-decanoylated forms Ghrelin-27-C10 and Ghrelin-28-C10 differ in the length of the carbon backbone of the carboxylic acid bound to Ser-26. A small fraction of ghrelin, ghrelin-27-C10:1, ghrelin-27-C10:2, ghrelin-28-C8:1, ghrelin-28-C10:1, and ghrelin-28-C10:2, may be modified with singly or doubly unsaturated carboxylic acids. In terms of processing, amidation of Leu-98 is essential for obestatin activity.

It is found in the secreted. In terms of biological role, ghrelin is the ligand for growth hormone secretagogue receptor type 1 (GHSR). Induces the release of growth hormone from the pituitary. Has an appetite-stimulating effect, induces adiposity and stimulates gastric acid secretion. Involved in growth regulation. Its function is as follows. Obestatin may be the ligand for GPR39. May have an appetite-reducing effect resulting in decreased food intake. May reduce gastric emptying activity and jejunal motility. In Felis catus (Cat), this protein is Appetite-regulating hormone (GHRL).